We begin with the raw amino-acid sequence, 440 residues long: MQAYFDQLDRVRYEGSKSSNPLAFRHYNPDELVLGKRMEEHLRFAACYWHTFCWNGADMFGVGAFNRPWQQPGEALALAKRKADVAFEFFHKLHVPFYCFHDVDVSPEGASLKEYINNFAQMVDVLAGKQEESGVKLLWGTANCFTNPRYGAGAATNPDPEVFSWAATQVVTAMEATHKLGGENYVLWGGREGYETLLNTDLRQEREQLGRFMQMVVEHKHKIGFQGTLLIEPKPQEPTKHQYDYDAATVYGFLKQFGLEKEIKLNIEANHATLAGHSFHHEIATAIALGLFGSVDANRGDAQLGWDTDQFPNSVEENALVMYEILKAGGFTTGGLNFDAKVRRQSTDKYDLFYGHIGAMDTMALALKIAARMIEDGELDKRIAQRYSGWNSELGQQILKGQMSLADLAKYAQEHHLSPVHQSGRQEQLENLVNHYLFDK.

The Mg(2+) site is built by D307 and D309.

Belongs to the xylose isomerase family. In terms of assembly, homotetramer. Requires Mg(2+) as cofactor.

The protein localises to the cytoplasm. It catalyses the reaction alpha-D-xylose = alpha-D-xylulofuranose. This chain is Xylose isomerase, found in Escherichia coli (strain K12 / MC4100 / BW2952).